We begin with the raw amino-acid sequence, 167 residues long: Ubiquitin-fold modifier-conjugating enzyme 1 (167 aa).

The active-site Glycyl thioester intermediate is the Cys116. Lys122 is covalently cross-linked (Glycyl lysine isopeptide (Lys-Gly) (interchain with G-Cter in UFM1)).

It belongs to the ubiquitin-conjugating enzyme family. UFC1 subfamily. Interacts with UBA5 (via C-terminus). Interacts with UFL1. Interacts with UFM1. Interacts with KIRREL3. Ufmylated at Lys-122. Deufmylated by UFSP1.

In terms of biological role, E2-like enzyme which specifically catalyzes the second step in ufmylation. Accepts the ubiquitin-like modifier UFM1 from the E1 enzyme UBA5 and forms an intermediate with UFM1 via a thioester linkage. Ufmylation is involved in various processes, such as ribosome recycling, response to DNA damage, interferon response or reticulophagy (also called ER-phagy). The chain is Ubiquitin-fold modifier-conjugating enzyme 1 from Mus musculus (Mouse).